We begin with the raw amino-acid sequence, 154 residues long: Small ribosomal subunit protein uS19 (154 aa).

This sequence belongs to the universal ribosomal protein uS19 family.

The polypeptide is Small ribosomal subunit protein uS19 (RPS15) (Oryza sativa subsp. japonica (Rice)).